The chain runs to 1381 residues: Hepatocyte growth factor receptor (1381 aa).

The signal sequence occupies residues 1–24 (MKAPAVLAPGILMLLFTLVQRSNG). The Extracellular segment spans residues 25 to 932 (ECKEALAKSE…VIVQPDQNFT (908 aa)). A Sema domain is found at 27–515 (KEALAKSEMN…TGKKITKIPL (489 aa)). Asparagine 45 is a glycosylation site (N-linked (GlcNAc...) asparagine). 4 disulfides stabilise this stretch: cysteine 95–cysteine 101, cysteine 98–cysteine 160, cysteine 133–cysteine 141, and cysteine 172–cysteine 175. Residue asparagine 106 is glycosylated (N-linked (GlcNAc...) asparagine). The N-linked (GlcNAc...) asparagine glycan is linked to asparagine 149. Asparagine 202 carries N-linked (GlcNAc...) asparagine glycosylation. 2 cysteine pairs are disulfide-bonded: cysteine 298–cysteine 363 and cysteine 385–cysteine 397. Asparagine 399 and asparagine 405 each carry an N-linked (GlcNAc...) asparagine glycan. Intrachain disulfides connect cysteine 520/cysteine 538, cysteine 526/cysteine 561, cysteine 529/cysteine 545, and cysteine 541/cysteine 551. IPT/TIG domains are found at residues 563–655 (PAIY…FSYV), 657–739 (PIIT…FSYR), and 742–836 (PIVY…LIYV). Residue threonine 582 is glycosylated (O-linked (Man) threonine). 2 N-linked (GlcNAc...) asparagine glycosylation sites follow: asparagine 607 and asparagine 635. 2 O-linked (Man) threonine glycosylation sites follow: threonine 676 and threonine 761. Asparagine 785, asparagine 879, and asparagine 930 each carry an N-linked (GlcNAc...) asparagine glycan. Residues 933 to 955 (GLIAGVVSISIALLLLLGLFLWL) form a helical membrane-spanning segment. Residues 956 to 1381 (KKRKQIKDLG…EDNADDEVDT (426 aa)) are Cytoplasmic-facing. Serine 966 carries the phosphoserine modification. Threonine 977 carries the post-translational modification Phosphothreonine. Serine 990, serine 997, and serine 1000 each carry phosphoserine. Tyrosine 1003 carries the post-translational modification Phosphotyrosine. The 268-residue stretch at 1078-1345 (VHFNEVIGRG…RISAIFSTFI (268 aa)) folds into the Protein kinase domain. Residues 1084–1092 (IGRGHFGCV) and lysine 1110 contribute to the ATP site. The active-site Proton acceptor is the aspartate 1204. The segment at 1212–1381 (LDEKFTVKVA…EDNADDEVDT (170 aa)) is interaction with RANBP9. Tyrosine 1230 bears the Phosphotyrosine mark. Phosphotyrosine; by autocatalysis is present on residues tyrosine 1234 and tyrosine 1235. Phosphothreonine is present on threonine 1289. The tract at residues 1320 to 1359 (WHPKAEMRPSFSELVSRISAIFSTFIGEHYVHVNATYVNV) is interaction with MUC20. Phosphotyrosine; by autocatalysis occurs at positions 1349 and 1356. Tyrosine 1365 bears the Phosphotyrosine mark.

It belongs to the protein kinase superfamily. Tyr protein kinase family. Heterodimer made of an alpha chain (50 kDa) and a beta chain (145 kDa) which are disulfide linked. Binds PLXNB1. Interacts when phosphorylated with downstream effectors including STAT3, PIK3R1, SRC, PCLG1, GRB2 and GAB1. Interacts with SPSB1, SPSB2 and SPSB4. Interacts with INPP5D/SHIP1. When phosphorylated at Tyr-1356, interacts with INPPL1/SHIP2. Interacts with RANBP9 and RANBP10, as well as SPSB1, SPSB2, SPSB3 and SPSB4. SPSB1 binding occurs in the presence and in the absence of HGF, however HGF treatment has a positive effect on this interaction. Interacts with MUC20; prevents interaction with GRB2 and suppresses hepatocyte growth factor-induced cell proliferation. Interacts with GRB10. Interacts with PTPN1 and PTPN2. Interacts with HSP90AA1 and HSP90AB1; the interaction suppresses MET kinase activity. Interacts with tensin TNS3. Interacts (when phosphorylated) with tensin TNS4 (via SH2 domain); the interaction increases MET protein stability by inhibiting MET endocytosis and subsequent lysosomal degradation. In terms of assembly, (Microbial infection) Immunoprecipitates with L.monocytogenes InlB. InlB probably dimerizes upon binding to MET, which encourages subsequent dimerization of MET. Autophosphorylated in response to ligand binding on Tyr-1234 and Tyr-1235 in the kinase domain leading to further phosphorylation of Tyr-1349 and Tyr-1356 in the C-terminal multifunctional docking site. Dephosphorylated by PTPRJ at Tyr-1349 and Tyr-1365. Dephosphorylated by PTPN1 and PTPN2. In terms of processing, ubiquitinated. Ubiquitination by CBL regulates the receptor stability and activity through proteasomal degradation. Post-translationally, O-mannosylation of IPT/TIG domains by TMEM260 is required for protein maturation. O-mannosylated residues are composed of single mannose glycans that are not elongated or modified. (Microbial infection) Tyrosine phosphorylation is stimulated by L.monocytogenes InlB.

The protein localises to the membrane. It carries out the reaction L-tyrosyl-[protein] + ATP = O-phospho-L-tyrosyl-[protein] + ADP + H(+). Its activity is regulated as follows. In its inactive state, the C-terminal tail interacts with the catalytic domain and inhibits the kinase activity. Upon ligand binding, the C-terminal tail is displaced and becomes phosphorylated, thus increasing the kinase activity. Functionally, receptor tyrosine kinase that transduces signals from the extracellular matrix into the cytoplasm by binding to hepatocyte growth factor/HGF ligand. Regulates many physiological processes including proliferation, scattering, morphogenesis and survival. Ligand binding at the cell surface induces autophosphorylation of MET on its intracellular domain that provides docking sites for downstream signaling molecules. Following activation by ligand, interacts with the PI3-kinase subunit PIK3R1, PLCG1, SRC, GRB2, STAT3 or the adapter GAB1. Recruitment of these downstream effectors by MET leads to the activation of several signaling cascades including the RAS-ERK, PI3 kinase-AKT, or PLCgamma-PKC. The RAS-ERK activation is associated with the morphogenetic effects while PI3K/AKT coordinates prosurvival effects. During embryonic development, MET signaling plays a role in gastrulation, development and migration of muscles and neuronal precursors, angiogenesis and kidney formation. In adults, participates in wound healing as well as organ regeneration and tissue remodeling. Also promotes differentiation and proliferation of hematopoietic cells. (Microbial infection) Acts as a receptor for Listeria monocytogenes internalin InlB, mediating entry of the pathogen into cells. The protein is Hepatocyte growth factor receptor (MET) of Chlorocebus aethiops (Green monkey).